Reading from the N-terminus, the 359-residue chain is Heat-inducible transcription repressor HrcA (359 aa).

The protein belongs to the HrcA family.

Negative regulator of class I heat shock genes (grpE-dnaK-dnaJ and groELS operons). Prevents heat-shock induction of these operons. This chain is Heat-inducible transcription repressor HrcA, found in Sinorhizobium medicae (strain WSM419) (Ensifer medicae).